The primary structure comprises 190 residues: Holliday junction branch migration complex subunit RuvA (190 aa).

The interval 1 to 65 is domain I; that stretch reads MIGNLSGIVD…ENVAQLYGFI (65 aa). The segment at 66–143 is domain II; sequence SKEEQQCLRL…KLEINNNNFH (78 aa). The tract at residues 144-147 is flexible linker; it reads PINE. A domain III region spans residues 147–190; sequence EDALSALINLGYEKMKAYDTIKKYRPNLDTKDIIRMALKELSIL.

It belongs to the RuvA family. Homotetramer. Forms an RuvA(8)-RuvB(12)-Holliday junction (HJ) complex. HJ DNA is sandwiched between 2 RuvA tetramers; dsDNA enters through RuvA and exits via RuvB. An RuvB hexamer assembles on each DNA strand where it exits the tetramer. Each RuvB hexamer is contacted by two RuvA subunits (via domain III) on 2 adjacent RuvB subunits; this complex drives branch migration. In the full resolvosome a probable DNA-RuvA(4)-RuvB(12)-RuvC(2) complex forms which resolves the HJ.

Its subcellular location is the cytoplasm. Its function is as follows. The RuvA-RuvB-RuvC complex processes Holliday junction (HJ) DNA during genetic recombination and DNA repair, while the RuvA-RuvB complex plays an important role in the rescue of blocked DNA replication forks via replication fork reversal (RFR). RuvA specifically binds to HJ cruciform DNA, conferring on it an open structure. The RuvB hexamer acts as an ATP-dependent pump, pulling dsDNA into and through the RuvAB complex. HJ branch migration allows RuvC to scan DNA until it finds its consensus sequence, where it cleaves and resolves the cruciform DNA. The polypeptide is Holliday junction branch migration complex subunit RuvA (Wolbachia pipientis wMel).